The following is a 1296-amino-acid chain: Aggregation substance (1296 aa).

A signal peptide spans 1-43; sequence MKQQTEVKKRFKMYKAKKHWVVAPILFIGVLGVVGLATDDVQA. Disordered stretches follow at residues 48-188 and 1221-1245; these read TQPG…KPAE and HTPEKPQTPPEKTVIVPPTPKTPQA. Residues 89-99 show a composition bias toward basic and acidic residues; it reads KVEEVASEKNG. Polar residues-rich tracts occupy residues 100 to 117 and 125 to 138; these read AEQSSATPNDTTNAQQPT and QEQPVVSPETTNEP. Over residues 160–178 the composition is skewed to basic and acidic residues; it reads KEFETPDVDKAVDEAKKDP. An LPXTG sorting signal motif is present at residues 1261-1265; that stretch reads LPQTG. Threonine 1264 is modified (pentaglycyl murein peptidoglycan amidated threonine). Residues 1265-1296 constitute a propeptide, removed by sortase; the sequence is GEKQNVLLTVAGSLAAMLGLAGLGFKRRKETK.

It belongs to the antigen I/II family.

The protein resides in the secreted. The protein localises to the cell wall. In terms of biological role, aggregation substance allows donor and recipient strains to form tight aggregates which allow the non-motile bacteria to maintain physical contact over a period of time sufficient to permit conjugative transfer of the sex pheromone plasmid from donor to recipient strains. This Enterococcus faecalis (strain ATCC 700802 / V583) protein is Aggregation substance (asa1).